Consider the following 185-residue polypeptide: Ribosome-recycling factor (185 aa).

It belongs to the RRF family.

It is found in the cytoplasm. Responsible for the release of ribosomes from messenger RNA at the termination of protein biosynthesis. May increase the efficiency of translation by recycling ribosomes from one round of translation to another. In Halothermothrix orenii (strain H 168 / OCM 544 / DSM 9562), this protein is Ribosome-recycling factor.